The following is a 267-amino-acid chain: Small ribosomal subunit protein uS3 (267 aa).

Residues 43-111 (IRKAMSKDLE…QVQLNIFEVK (69 aa)) enclose the KH type-2 domain. The tract at residues 216-267 (FEEQQAQQSNNRQGRRGDRRPRRGQRNAAPQQNAAAEAPAAAEAPAATETKE) is disordered. Basic residues predominate over residues 228–240 (QGRRGDRRPRRGQ). Residues 241–267 (RNAAPQQNAAAEAPAAAEAPAATETKE) show a composition bias toward low complexity.

It belongs to the universal ribosomal protein uS3 family. Part of the 30S ribosomal subunit. Forms a tight complex with proteins S10 and S14.

Functionally, binds the lower part of the 30S subunit head. Binds mRNA in the 70S ribosome, positioning it for translation. In Bifidobacterium adolescentis (strain ATCC 15703 / DSM 20083 / NCTC 11814 / E194a), this protein is Small ribosomal subunit protein uS3.